We begin with the raw amino-acid sequence, 338 residues long: tRNA N6-adenosine threonylcarbamoyltransferase (338 aa).

The Fe cation site is built by His-111 and His-115. Residues 134-138, Asp-167, Gly-180, and Asn-272 each bind substrate; that span reads LVSGG. Asp-300 is a Fe cation binding site.

The protein belongs to the KAE1 / TsaD family. Fe(2+) is required as a cofactor.

It localises to the cytoplasm. It catalyses the reaction L-threonylcarbamoyladenylate + adenosine(37) in tRNA = N(6)-L-threonylcarbamoyladenosine(37) in tRNA + AMP + H(+). In terms of biological role, required for the formation of a threonylcarbamoyl group on adenosine at position 37 (t(6)A37) in tRNAs that read codons beginning with adenine. Is involved in the transfer of the threonylcarbamoyl moiety of threonylcarbamoyl-AMP (TC-AMP) to the N6 group of A37, together with TsaE and TsaB. TsaD likely plays a direct catalytic role in this reaction. This is tRNA N6-adenosine threonylcarbamoyltransferase from Shewanella baltica (strain OS155 / ATCC BAA-1091).